The primary structure comprises 670 residues: RxLR effector protein PSR2 (670 aa).

The signal sequence occupies residues 1–17 (MRLQCVVLFAALTLVAA). A RxLR-dEER motif is present at residues 39-54 (RLLRPGNPAGKEDEER). Asn-57 carries an N-linked (GlcNAc...) asparagine glycan. Residues 79 to 126 (KLLKWADAKKPPETVFTRLRLDKTGTQLFDNTDFPVWAAYTRSVAQTD) form a WY1 repeat. The segment at 79–670 (KLLKWADAKK…YSAKFKVRWG (592 aa)) is 7 X 93 AA tandem repeats. An LWY2 repeat occupies 127-217 (SEASAVMLKT…NYMKLSNKEN (91 aa)). Residues 218-308 (PKAQTTLIAT…KYINYYNKEN (91 aa)) form an LWY3 repeat. Residues 309–399 (PDEKTTVLAK…KYTENFNLNK (91 aa)) form an LWY4 repeat. The stretch at 400–492 (EINEQVTAIQ…KFLEKYNTAN (93 aa)) is one LWY5 repeat. Residues 493-583 (PGKEQTMISG…KYLNAFNDKA (91 aa)) form an LWY6 repeat. Residues 584–670 (PVKKALMIDT…YSAKFKVRWG (87 aa)) form an LWY7 repeat.

It belongs to the RxLR effector family. In terms of assembly, interacts with host dsRNA-binding protein DRB4.

The protein localises to the secreted. It localises to the host cell. In terms of biological role, secreted effector that possesses RNA silencing suppression activity by inhibiting the biogenesis of small RNAs in the host plant to promote enhanced susceptibility of host to the pathogen during infection. Interferes with secondary siRNA production by associating with host dsRNA-binding protein DRB4. Inhibits the host salicylic acid pathway during infection. The chain is RxLR effector protein PSR2 from Phytophthora sojae (Soybean stem and root rot agent).